A 451-amino-acid chain; its full sequence is Glycine--tRNA ligase (451 aa).

Residues Arg-94 and Glu-164 each contribute to the substrate site. ATP contacts are provided by residues 196–198 (RNE), 206–211 (FRTREF), 281–282 (EL), and 325–328 (GVER). 211–215 (FEQME) is a binding site for substrate. Position 321-325 (321-325 (EPSVG)) interacts with substrate.

It belongs to the class-II aminoacyl-tRNA synthetase family. As to quaternary structure, homodimer.

It is found in the cytoplasm. The catalysed reaction is tRNA(Gly) + glycine + ATP = glycyl-tRNA(Gly) + AMP + diphosphate. Catalyzes the attachment of glycine to tRNA(Gly). The chain is Glycine--tRNA ligase from Mesoplasma florum (strain ATCC 33453 / NBRC 100688 / NCTC 11704 / L1) (Acholeplasma florum).